The sequence spans 678 residues: Exoribonuclease 2 (678 aa).

Residues 193 to 521 (REDLTALPFV…INHRLLKAHI (329 aa)) enclose the RNB domain. The region spanning 568–650 (ETRFQAEIFD…ENRSLVGKPT (83 aa)) is the S1 motif domain. The segment at 658-678 (SETQTSTEQPAEGAENNEPQA) is disordered.

This sequence belongs to the RNR ribonuclease family. RNase II subfamily.

The protein localises to the cytoplasm. The catalysed reaction is Exonucleolytic cleavage in the 3'- to 5'-direction to yield nucleoside 5'-phosphates.. Involved in mRNA degradation. Hydrolyzes single-stranded polyribonucleotides processively in the 3' to 5' direction. The chain is Exoribonuclease 2 from Vibrio cholerae serotype O1 (strain ATCC 39541 / Classical Ogawa 395 / O395).